The primary structure comprises 739 residues: Mitochondrial proton/calcium exchanger protein (739 aa).

The N-terminal 115 residues, 1 to 115 (MASILLRSCR…RGWHSSRPVR (115 aa)), are a transit peptide targeting the mitochondrion. Residues 115–136 (RDDSVVEKSLKSLKDKNKKLEE) are a coiled coil. Topologically, residues 116 to 208 (DDSVVEKSLK…FLRICADLFR (93 aa)) are mitochondrial intermembrane. Residue Thr-192 is modified to Phosphothreonine; by PINK1. The chain crosses the membrane as a helical span at residues 209-229 (LVPFLVFVVVPFMEFLLPVAV). At 230–739 (KLFPNMLPST…AEKEVAEVKS (510 aa)) the chain is on the mitochondrial matrix side. Residues 252–537 (KELRVKLELA…TAPVLEGLKE (286 aa)) enclose the Letm1 RBD domain. Coiled-coil stretches lie at residues 462 to 490 (NKAKLEATLQEEAAIQQEHREKELQKRSE) and 537 to 627 (EEEI…SQLE). At Lys-597 the chain carries N6-acetyllysine. The region spanning 663–698 (IPESKLTSLAAALDENKDGKVNIDDLVKVIELVDKE) is the EF-hand domain. Ca(2+)-binding residues include Asp-676, Asn-678, Asp-680, Lys-682, and Asp-687. Residues 708 to 739 (AEIVATLEKEEKVEEKEKAKEKAEKEVAEVKS) are a coiled coil. Residues 718-739 (EKVEEKEKAKEKAEKEVAEVKS) are disordered.

It belongs to the LETM1 family. As to quaternary structure, homohexamer. Can form 2 complexes: a major (300 kDa) and a minor complex (500-600 kDa). Interacts with BCS1L. Interacts with GHITM. Post-translationally, PINK1-mediated phosphorylation at Thr-192, positively regulates its mitochondrial calcium transport activity.

Its subcellular location is the mitochondrion inner membrane. The catalysed reaction is Ca(2+)(in) + 2 H(+)(out) = Ca(2+)(out) + 2 H(+)(in). The enzyme catalyses K(+)(in) + H(+)(out) = K(+)(out) + H(+)(in). Its activity is regulated as follows. Inhibited by ruthenium red or its derivative Ru360. Functionally, plays an important role in maintenance of mitochondrial morphology and in mediating either calcium or potassium/proton antiport. Mediates proton-dependent calcium efflux from mitochondrion. Also functions as an electroneutral mitochondrial proton/potassium exchanger. Crucial for the maintenance of mitochondrial tubular networks and for the assembly of the supercomplexes of the respiratory chain. Required for the maintenance of the tubular shape and cristae organization. This is Mitochondrial proton/calcium exchanger protein from Homo sapiens (Human).